The following is a 281-amino-acid chain: NADH--cytochrome b5 reductase 1 (281 aa).

Residues 13 to 33 (ILLGVFVAFVAVGAGAAYFLT) traverse the membrane as a helical segment. The short motif at 34 to 40 (SSKKRRV) is the AKR2A-binding sequence (ABS) required for mitochondrion outer membrane targeting element. An FAD-binding FR-type domain is found at 45–149 (ENFKEFKLVK…KGPKGRFKYQ (105 aa)). FAD contacts are provided by residues 129–144 (REMR…GPKG) and 155–187 (AFGM…KVHL). Thr-166 is modified (phosphothreonine).

This sequence belongs to the flavoprotein pyridine nucleotide cytochrome reductase family. As to quaternary structure, monomer. Interacts with AKR2A. FAD is required as a cofactor. As to expression, expressed in roots, stems, flowers and siliques. Detected in leaves.

It is found in the mitochondrion outer membrane. It catalyses the reaction 2 Fe(III)-[cytochrome b5] + NADH = 2 Fe(II)-[cytochrome b5] + NAD(+) + H(+). Its function is as follows. Reductase transferring electrons from NADH to cytochrome b5. Required for the NADH-dependent electron transfer involved in the desaturation and hydroxylation of fatty acids and in the desaturation of sterol precursors. No activity with NADPH as electron donor. This chain is NADH--cytochrome b5 reductase 1, found in Arabidopsis thaliana (Mouse-ear cress).